A 354-amino-acid chain; its full sequence is Allantoicase (354 aa).

It belongs to the allantoicase family.

It catalyses the reaction allantoate + H2O = (S)-ureidoglycolate + urea. It functions in the pathway nitrogen metabolism; (S)-allantoin degradation; (S)-ureidoglycolate from allantoate (aminidohydrolase route): step 1/1. Its function is as follows. Utilization of purines as secondary nitrogen sources, when primary sources are limiting. The polypeptide is Allantoicase (alc-1) (Neurospora crassa (strain ATCC 24698 / 74-OR23-1A / CBS 708.71 / DSM 1257 / FGSC 987)).